The following is a 99-amino-acid chain: Large ribosomal subunit protein uL23 (99 aa).

It belongs to the universal ribosomal protein uL23 family. Part of the 50S ribosomal subunit. Contacts protein L29, and trigger factor when it is bound to the ribosome.

Its function is as follows. One of the early assembly proteins it binds 23S rRNA. One of the proteins that surrounds the polypeptide exit tunnel on the outside of the ribosome. Forms the main docking site for trigger factor binding to the ribosome. The sequence is that of Large ribosomal subunit protein uL23 from Pseudomonas fluorescens (strain SBW25).